We begin with the raw amino-acid sequence, 296 residues long: Ribonuclease HIII (296 aa).

The 217-residue stretch at 80–296 (LALIGSDEVG…NTKKAYQRLK (217 aa)) folds into the RNase H type-2 domain. A divalent metal cation contacts are provided by Asp86, Glu87, and Asp191.

The protein belongs to the RNase HII family. RnhC subfamily. Mn(2+) is required as a cofactor. Requires Mg(2+) as cofactor.

The protein resides in the cytoplasm. It carries out the reaction Endonucleolytic cleavage to 5'-phosphomonoester.. In terms of biological role, endonuclease that specifically degrades the RNA of RNA-DNA hybrids. The polypeptide is Ribonuclease HIII (Streptococcus thermophilus (strain ATCC BAA-491 / LMD-9)).